The primary structure comprises 1325 residues: uncharacterized protein (1325 aa).

Residues 1 to 18 (MNRIYRVIWNCTLQVFQA) form the signal peptide. Cys-19 carries the N-palmitoyl cysteine lipid modification. Cys-19 carries the S-diacylglycerol cysteine lipid modification.

This sequence to E.coli YfaL.

Its subcellular location is the cell membrane. This is an uncharacterized protein from Escherichia coli (strain K12).